A 91-amino-acid polypeptide reads, in one-letter code: Large ribosomal subunit protein eL31 (91 aa).

It belongs to the eukaryotic ribosomal protein eL31 family.

In Pyrobaculum neutrophilum (strain DSM 2338 / JCM 9278 / NBRC 100436 / V24Sta) (Thermoproteus neutrophilus), this protein is Large ribosomal subunit protein eL31.